The following is a 367-amino-acid chain: Probable L-aspartate decarboxylase (367 aa).

Lysine 216 bears the N6-(pyridoxal phosphate)lysine mark.

This sequence belongs to the group II decarboxylase family. MfnA subfamily. Pyridoxal 5'-phosphate serves as cofactor.

The catalysed reaction is L-aspartate + H(+) = beta-alanine + CO2. It functions in the pathway cofactor biosynthesis; coenzyme A biosynthesis. Its function is as follows. Catalyzes the decarboxylation of L-aspartate to produce beta-alanine. The sequence is that of Probable L-aspartate decarboxylase from Archaeoglobus fulgidus (strain ATCC 49558 / DSM 4304 / JCM 9628 / NBRC 100126 / VC-16).